A 458-amino-acid polypeptide reads, in one-letter code: NADH-quinone oxidoreductase subunit N (458 aa).

A run of 13 helical transmembrane segments spans residues 3–23, 29–49, 64–84, 92–112, 147–167, 188–208, 222–242, 265–285, 291–311, 320–340, 358–378, 394–414, and 437–457; these read QYLFLLPEITLFILSCLLLFL, FGLIAVLITLAATFFSQTCTS, QNVKLVILAFTCVFFIQAIAV, FSVLVLLSLLGMLLSVSSSTL, TLLGTFMSAVMIYGISLIFVV, ILLFISGLMFKVAAAPFHAWI, FFAVLPKLSLIVVLVSLISNL, NILFTSGILSIAFGTFSAFGQ, FIGFASIAHVGYMLLGVSNSA, IAYALVYSFTNLGILSVVLML, VALAFVLLLFSSAGVPPFIGF, IPTAIFSMLAGVISAFYYARI, and LLTSIVVLCALFSTFGFVLLI.

This sequence belongs to the complex I subunit 2 family. In terms of assembly, NDH-1 is composed of 14 different subunits. Subunits NuoA, H, J, K, L, M, N constitute the membrane sector of the complex.

It is found in the cell inner membrane. It carries out the reaction a quinone + NADH + 5 H(+)(in) = a quinol + NAD(+) + 4 H(+)(out). In terms of biological role, NDH-1 shuttles electrons from NADH, via FMN and iron-sulfur (Fe-S) centers, to quinones in the respiratory chain. The immediate electron acceptor for the enzyme in this species is believed to be ubiquinone. Couples the redox reaction to proton translocation (for every two electrons transferred, four hydrogen ions are translocated across the cytoplasmic membrane), and thus conserves the redox energy in a proton gradient. The sequence is that of NADH-quinone oxidoreductase subunit N from Neorickettsia risticii (strain Illinois).